The following is a 348-amino-acid chain: TEGPYFYIPMVNTTGIVRSPYEYPQYYLVNPAAYAMLGAYMFFLIIVGFPVNFMTLYVTLEHKKLRTPLNYILLNLAVADLFMVIGGFTTTIYTSMHGYFVLGRLGCNIEGFFATLGGMISLWSLAVLAIERWVVVCKPISNFRFGENHAIMGVSLTWAMALACTVPPLVGWSRYIPEGMQCSCGIDYYTRAEGFNNESFVLYMFFCHFTIPLTIIFFCYGRLLCAVKEAAAAQQESETTQRAEREVTRMVIIMVIGFLICWLPYASVAWFIFTHQGSEFGPLFMTIPAFFAKSSSIYNPMIYICMNKQFRHCMITTLFCGKNPFEGEEEGASSTKTEASSASSVSPA.

Residues 1–33 lie on the Extracellular side of the membrane; it reads TEGPYFYIPMVNTTGIVRSPYEYPQYYLVNPAA. Asparagine 12 carries an N-linked (GlcNAc...) asparagine glycan. A helical membrane pass occupies residues 34–58; the sequence is YAMLGAYMFFLIIVGFPVNFMTLYV. Residues 59-70 are Cytoplasmic-facing; the sequence is TLEHKKLRTPLN. Residues 71-93 traverse the membrane as a helical segment; it reads YILLNLAVADLFMVIGGFTTTIY. Residues 94–107 are Extracellular-facing; it reads TSMHGYFVLGRLGC. An intrachain disulfide couples cysteine 107 to cysteine 184. Residues 108–130 traverse the membrane as a helical segment; the sequence is NIEGFFATLGGMISLWSLAVLAI. The short motif at 131–133 is the 'Ionic lock' involved in activated form stabilization element; sequence ERW. Over 131-149 the chain is Cytoplasmic; it reads ERWVVVCKPISNFRFGENH. The chain crosses the membrane as a helical span at residues 150–170; the sequence is AIMGVSLTWAMALACTVPPLV. Over 171–199 the chain is Extracellular; sequence GWSRYIPEGMQCSCGIDYYTRAEGFNNES. N-linked (GlcNAc...) asparagine glycosylation occurs at asparagine 197. A helical transmembrane segment spans residues 200-221; that stretch reads FVLYMFFCHFTIPLTIIFFCYG. Residues 222–249 are Cytoplasmic-facing; the sequence is RLLCAVKEAAAAQQESETTQRAEREVTR. The chain crosses the membrane as a helical span at residues 250–271; sequence MVIIMVIGFLICWLPYASVAWF. The Extracellular portion of the chain corresponds to 272 to 283; that stretch reads IFTHQGSEFGPL. The chain crosses the membrane as a helical span at residues 284–305; it reads FMTIPAFFAKSSSIYNPMIYIC. Lysine 293 is subject to N6-(retinylidene)lysine. Topologically, residues 306–348 are cytoplasmic; the sequence is MNKQFRHCMITTLFCGKNPFEGEEEGASSTKTEASSASSVSPA. The S-palmitoyl cysteine moiety is linked to residue cysteine 320. Residues 327-348 form a disordered region; it reads GEEEGASSTKTEASSASSVSPA. Over residues 332-348 the composition is skewed to low complexity; it reads ASSTKTEASSASSVSPA.

It belongs to the G-protein coupled receptor 1 family. Opsin subfamily. In terms of processing, phosphorylated on some or all of the serine and threonine residues present in the C-terminal region. Post-translationally, contains one covalently linked retinal chromophore.

It localises to the membrane. It is found in the cell projection. The protein localises to the cilium. The protein resides in the photoreceptor outer segment. In terms of biological role, photoreceptor required for image-forming vision at low light intensity. While most salt water fish species use retinal as chromophore, most freshwater fish use 3-dehydroretinal, or a mixture of retinal and 3-dehydroretinal. Light-induced isomerization of 11-cis to all-trans retinal triggers a conformational change that activates signaling via G-proteins. Subsequent receptor phosphorylation mediates displacement of the bound G-protein alpha subunit by arrestin and terminates signaling. In Sargocentron microstoma (Smallmouth squirrelfish), this protein is Rhodopsin (rho).